Here is a 456-residue protein sequence, read N- to C-terminus: Solute carrier family 49 member 4 homolog (456 aa).

The Cytoplasmic portion of the chain corresponds to 1-29 (MGLEWSSPGERQPLLFPGGPRSPRVFGRR). The Di-leucine motif; mediates lysosomal localization signature appears at 14–15 (LL). A helical transmembrane segment spans residues 30-50 (WLVLLLFSVLAFLQGLVWNSW). The Lumenal portion of the chain corresponds to 51–67 (GPIQISARTAYKFSGLD). A helical transmembrane segment spans residues 68–88 (IALLVLWGPIGFLPCFLFMWL). The Cytoplasmic portion of the chain corresponds to 89-95 (MDNRGLR). The helical transmembrane segment at 96 to 116 (ITVLLTALLMVLGAGLRCVPV) threads the bilayer. The Lumenal portion of the chain corresponds to 117 to 123 (EDLAIRR). Residues 124–144 (ILIHGGQLLNGFAGPTVMNAA) form a helical membrane-spanning segment. At 145 to 162 (PFLSTTWFAPDERATATA) the chain is on the cytoplasmic side. A helical transmembrane segment spans residues 163–183 (IASMLNYLGGACAFLVGPLVV). At 184–207 (PAPNSTSGLLLYSGSTDAIKDRIE) the chain is on the lumenal side. Asparagine 187 carries N-linked (GlcNAc...) asparagine glycosylation. A helical transmembrane segment spans residues 208-228 (AVMYAEFGIIFVVFAAILAYF). The Cytoplasmic portion of the chain corresponds to 229-259 (PARPPVPPSVAAASRRLSYRTSIFRLLSNLR). The helical transmembrane segment at 260 to 280 (FLLIVLAYAIPLGFYSGWIGV) threads the bilayer. Topologically, residues 281 to 292 (LDLILTPVHVTQ) are lumenal. Residues 293 to 313 (VDAGWVGFWSIVGGCVVGIAV) traverse the membrane as a helical segment. At 314 to 326 (GRFADSIRGVLKP) the chain is on the cytoplasmic side. Residues 327–347 (ILLLLFSGATLSATWFTLTFL) form a helical membrane-spanning segment. Topologically, residues 348–362 (SNVTHLPLTTATLYT) are lumenal. A glycan (N-linked (GlcNAc...) asparagine) is linked at asparagine 349. A helical membrane pass occupies residues 363-383 (SCILIGVFLNGTVPIFFELFV). The Cytoplasmic portion of the chain corresponds to 384–392 (ETVYPIPEG). Residues 393–413 (IACGVVTFLSNIFMGVLLVFL) traverse the membrane as a helical segment. At 414-420 (TMYQMEL) the chain is on the lumenal side. Residues 421–441 (SWLNWCLTGSCFLSLFFIACF) form a helical membrane-spanning segment. Topologically, residues 442–456 (RESYDRLYLDVFVSV) are cytoplasmic.

Belongs to the major facilitator superfamily.

It localises to the lysosome membrane. It carries out the reaction pyridoxine(out) + n H(+)(out) = pyridoxine(in) + n H(+)(in). Its function is as follows. Mediates H(+)-dependent pyridoxine transport. In Xenopus laevis (African clawed frog), this protein is Solute carrier family 49 member 4 homolog (slc49a4).